The following is a 432-amino-acid chain: Adenylosuccinate synthetase (432 aa).

GTP is bound by residues 13-19 (GDEGKGK) and 41-43 (GHT). Asp14 functions as the Proton acceptor in the catalytic mechanism. Mg(2+)-binding residues include Asp14 and Gly41. Residues 14–17 (DEGK), 39–42 (NAGH), Thr130, Arg144, Gln225, Thr240, and Arg304 each bind IMP. The active-site Proton donor is the His42. A substrate-binding site is contributed by 300–306 (AVTGRPR). Residues Arg306, 332–334 (KLD), and 415–417 (STG) contribute to the GTP site.

The protein belongs to the adenylosuccinate synthetase family. As to quaternary structure, homodimer. Mg(2+) is required as a cofactor.

It is found in the cytoplasm. The catalysed reaction is IMP + L-aspartate + GTP = N(6)-(1,2-dicarboxyethyl)-AMP + GDP + phosphate + 2 H(+). It participates in purine metabolism; AMP biosynthesis via de novo pathway; AMP from IMP: step 1/2. In terms of biological role, plays an important role in the de novo pathway of purine nucleotide biosynthesis. Catalyzes the first committed step in the biosynthesis of AMP from IMP. The polypeptide is Adenylosuccinate synthetase (Mannheimia succiniciproducens (strain KCTC 0769BP / MBEL55E)).